The sequence spans 347 residues: 2-hydroxyacid dehydrogenase A (347 aa).

NAD(+) is bound by residues 157 to 158 (RI), D177, 234 to 236 (TSR), and D260. R236 is an active-site residue. E265 is an active-site residue.

Belongs to the D-isomer specific 2-hydroxyacid dehydrogenase family.

The catalysed reaction is a (2R)-2-hydroxycarboxylate + NADP(+) = a 2-oxocarboxylate + NADPH + H(+). Functionally, 2-hydroxyacid dehydrogenase that is capable to reduce pyruvate, hydroxypyruvate and glyoxylate in a NADPH- or NADH-dependent manner. In contrast to 2-HadhD/morA, does not recognize 4-methyl-2-oxopentanoate (MOA) as a substrate. The polypeptide is 2-hydroxyacid dehydrogenase A (Aspergillus oryzae (strain ATCC 42149 / RIB 40) (Yellow koji mold)).